A 449-amino-acid polypeptide reads, in one-letter code: UDP-N-acetylmuramoylalanine--D-glutamate ligase (449 aa).

Position 118 to 124 (118 to 124 (GSNGKTT)) interacts with ATP.

This sequence belongs to the MurCDEF family.

It is found in the cytoplasm. It catalyses the reaction UDP-N-acetyl-alpha-D-muramoyl-L-alanine + D-glutamate + ATP = UDP-N-acetyl-alpha-D-muramoyl-L-alanyl-D-glutamate + ADP + phosphate + H(+). The protein operates within cell wall biogenesis; peptidoglycan biosynthesis. Functionally, cell wall formation. Catalyzes the addition of glutamate to the nucleotide precursor UDP-N-acetylmuramoyl-L-alanine (UMA). This Leuconostoc citreum (strain KM20) protein is UDP-N-acetylmuramoylalanine--D-glutamate ligase.